The chain runs to 1116 residues: Disease resistance protein RGA5 (1116 aa).

Residues 1–177 (MDAPASFSLG…HHGVSANLVG (177 aa)) are structured coiled coil (CC) domain. An NB-ARC domain is found at 182-466 (KTKLNRWLSD…WSAEGFVSAN (285 aa)). LRR repeat units follow at residues 608–631 (LFQL…ISGL), 633–653 (YLET…LVHL), 654–675 (PNLL…GCMR), 677–701 (LRTL…ELTN), 732–755 (LSNL…DISS), 786–808 (LHKL…DNLT), 810–830 (LPSL…RFIF), 835–857 (LPVL…AGAM), and 858–882 (PNLQ…LFGI). The segment at 935–971 (EEESHPLEKQHHKREKGSSAGHGVLEKESVEDSEKNT) is disordered. The segment covering 958-971 (VLEKESVEDSEKNT) has biased composition (basic and acidic residues). The region spanning 997 to 1066 (RTKIVVKVHM…KCGLAELLMV (70 aa)) is the HMA domain. The segment at 1000-1070 (IVVKVHMPCG…AELLMVELVE (71 aa)) is HMA-like domain.

It belongs to the disease resistance NB-LRR family. Forms homodimer or heterodimer with RGA4 through its coiled coil (CC) domain. Interacts with AVR1-Pia and AVR-CO39 through its C-terminal part containing the HMA-like domain. In terms of tissue distribution, expressed in leaves.

It localises to the cytoplasm. Functionally, disease resistance (R) protein that recognizes the AVR-Pia and AVR1-CO39 effector avirulence proteins from M.oryzae. Resistance proteins guard the plant against pathogens that contain an appropriate avirulence protein via an indirect interaction with this avirulence protein. That triggers a defense system including the hypersensitive response, which restricts the pathogen growth. Contribution of RGA4 is required to recognize the effector avirulence proteins AVR-Pia and AVR1-CO39 from M.oryzae. Acts as a repressor of the RGA4-mediated cell death activation. Upon infection, recognition and binding of the AVR effectors relieve the RGA5-mediated repression and triggers the hypersensitive response. Immune response triggered by the RGA4-RGA5 -mediated recognition of AVR1-CO39 confers resistance to X.oryzae pathovars. This is Disease resistance protein RGA5 from Oryza sativa subsp. japonica (Rice).